The primary structure comprises 141 residues: Large ribosomal subunit protein uL11 (141 aa).

Belongs to the universal ribosomal protein uL11 family. As to quaternary structure, part of the ribosomal stalk of the 50S ribosomal subunit. Interacts with L10 and the large rRNA to form the base of the stalk. L10 forms an elongated spine to which L12 dimers bind in a sequential fashion forming a multimeric L10(L12)X complex. Post-translationally, one or more lysine residues are methylated.

In terms of biological role, forms part of the ribosomal stalk which helps the ribosome interact with GTP-bound translation factors. The polypeptide is Large ribosomal subunit protein uL11 (Desulfotalea psychrophila (strain LSv54 / DSM 12343)).